The primary structure comprises 154 residues: UPF0225 protein YPDSF_0962 (154 aa).

The protein belongs to the UPF0225 family.

This chain is UPF0225 protein YPDSF_0962, found in Yersinia pestis (strain Pestoides F).